The primary structure comprises 404 residues: POU domain, class 2, transcription factor 3L (404 aa).

Disordered stretches follow at residues 1–29 and 44–67; these read MNRE…TLDF and TGIP…MTGE. Basic and acidic residues predominate over residues 16 to 29; it reads GHLENDAERDTLDF. One can recognise a POU-specific domain in the interval 187–235; the sequence is QGDVGLAMGKLYGNDFSQTTISRFEALNLSFKNMCKLKPLLEKWLNDAE. Positions 259 to 297 form a DNA-binding region, homeobox; the sequence is KRKKRTSIETNIRLTLEKRFQDNPKPSSEEISMIAEQLV. Residues 346–367 are disordered; sequence MTVTSSCSPGNSSRPSSPTCGL. Positions 350-363 are enriched in low complexity; it reads SSCSPGNSSRPSSP.

Belongs to the POU transcription factor family. Class-2 subfamily.

The protein resides in the nucleus. Transcription factor that binds to the octamer motif (5'-ATTTGCAT-3') and regulates cell type-specific differentiation pathways. The sequence is that of POU domain, class 2, transcription factor 3L (pou2f3.L) from Xenopus laevis (African clawed frog).